We begin with the raw amino-acid sequence, 270 residues long: Interleukin-1 beta (270 aa).

Positions 1–118 are excised as a propeptide; sequence MATVPEPTSE…VYDDDAFVCD (118 aa).

It belongs to the IL-1 family. Monomer. In its precursor form, weakly interacts with full-length MEFV; the mature cytokine does not interact at all. Interacts with integrins ITGAV:ITGBV and ITGA5:ITGB1; integrin-binding is required for IL1B signaling. Interacts with cargo receptor TMED10; the interaction is direct and is required for the secretion of IL1B mature form. Interacts with HSP90AB1; the interaction facilitates cargo translocation into the ERGIC. Interacts with HSP90B1; the interaction facilitates cargo translocation into the ERGIC.

It is found in the cytoplasm. The protein resides in the cytosol. Its subcellular location is the secreted. The protein localises to the lysosome. It localises to the extracellular exosome. In terms of biological role, potent pro-inflammatory cytokine. Initially discovered as the major endogenous pyrogen, induces prostaglandin synthesis, neutrophil influx and activation, T-cell activation and cytokine production, B-cell activation and antibody production, and fibroblast proliferation and collagen production. Promotes Th17 differentiation of T-cells. Synergizes with IL12/interleukin-12 to induce IFNG synthesis from T-helper 1 (Th1) cells. Plays a role in angiogenesis by inducing VEGF production synergistically with TNF and IL6. Involved in transduction of inflammation downstream of pyroptosis: its mature form is specifically released in the extracellular milieu by passing through the gasdermin-D (GSDMD) pore. This is Interleukin-1 beta (IL1B) from Eumetopias jubatus (Steller sea lion).